The primary structure comprises 175 residues: Macro domain-containing protein TTE0995 (175 aa).

The Macro domain occupies 1–174; the sequence is MKEKIKLIKG…VYSKAYEELD (174 aa).

Belongs to the MacroD-type family.

The chain is Macro domain-containing protein TTE0995 from Caldanaerobacter subterraneus subsp. tengcongensis (strain DSM 15242 / JCM 11007 / NBRC 100824 / MB4) (Thermoanaerobacter tengcongensis).